Reading from the N-terminus, the 426-residue chain is Glutamate-1-semialdehyde 2,1-aminomutase (426 aa).

Residue Lys265 is modified to N6-(pyridoxal phosphate)lysine.

It belongs to the class-III pyridoxal-phosphate-dependent aminotransferase family. HemL subfamily. As to quaternary structure, homodimer. Pyridoxal 5'-phosphate is required as a cofactor.

The protein resides in the cytoplasm. The enzyme catalyses (S)-4-amino-5-oxopentanoate = 5-aminolevulinate. It functions in the pathway porphyrin-containing compound metabolism; protoporphyrin-IX biosynthesis; 5-aminolevulinate from L-glutamyl-tRNA(Glu): step 2/2. This chain is Glutamate-1-semialdehyde 2,1-aminomutase, found in Salmonella schwarzengrund (strain CVM19633).